A 406-amino-acid chain; its full sequence is S-adenosylmethionine synthase (406 aa).

141-146 (GQGSMD) serves as a coordination point for ATP.

It belongs to the AdoMet synthase 2 family. As to quaternary structure, homodimer. Mg(2+) serves as cofactor.

It catalyses the reaction L-methionine + ATP + H2O = S-adenosyl-L-methionine + phosphate + diphosphate. Its pathway is amino-acid biosynthesis; S-adenosyl-L-methionine biosynthesis; S-adenosyl-L-methionine from L-methionine: step 1/1. Catalyzes the formation of S-adenosylmethionine from methionine and ATP. This is S-adenosylmethionine synthase (mat) from Methanocaldococcus jannaschii (strain ATCC 43067 / DSM 2661 / JAL-1 / JCM 10045 / NBRC 100440) (Methanococcus jannaschii).